We begin with the raw amino-acid sequence, 484 residues long: Adenylosuccinate lyase (484 aa).

N-acetylalanine is present on alanine 2. Substrate-binding positions include 20–21 (RY), 85–87 (RHD), and 111–112 (TS). Lysine 147 bears the N6-acetyllysine mark. Histidine 159 (proton donor/acceptor) is an active-site residue. Residue glutamine 241 participates in substrate binding. Catalysis depends on serine 289, which acts as the Proton donor/acceptor. N6-acetyllysine is present on lysine 295. Residues arginine 303, arginine 329, serine 334, and arginine 338 each contribute to the substrate site. A Glycyl lysine isopeptide (Lys-Gly) (interchain with G-Cter in SUMO1) cross-link involves residue lysine 415.

Belongs to the lyase 1 family. Adenylosuccinate lyase subfamily. Homotetramer. Residues from neighboring subunits contribute catalytic and substrate-binding residues to each active site.

The enzyme catalyses N(6)-(1,2-dicarboxyethyl)-AMP = fumarate + AMP. The catalysed reaction is (2S)-2-[5-amino-1-(5-phospho-beta-D-ribosyl)imidazole-4-carboxamido]succinate = 5-amino-1-(5-phospho-beta-D-ribosyl)imidazole-4-carboxamide + fumarate. The protein operates within purine metabolism; AMP biosynthesis via de novo pathway; AMP from IMP: step 2/2. It participates in purine metabolism; IMP biosynthesis via de novo pathway; 5-amino-1-(5-phospho-D-ribosyl)imidazole-4-carboxamide from 5-amino-1-(5-phospho-D-ribosyl)imidazole-4-carboxylate: step 2/2. Functionally, catalyzes two non-sequential steps in de novo AMP synthesis: converts (S)-2-(5-amino-1-(5-phospho-D-ribosyl)imidazole-4-carboxamido)succinate (SAICAR) to fumarate plus 5-amino-1-(5-phospho-D-ribosyl)imidazole-4-carboxamide, and thereby also contributes to de novo IMP synthesis, and converts succinyladenosine monophosphate (SAMP) to AMP and fumarate. The polypeptide is Adenylosuccinate lyase (ADSL) (Macaca fascicularis (Crab-eating macaque)).